Consider the following 334-residue polypeptide: Endochitinase 3 (334 aa).

The N-terminal stretch at 1-23 (MRLLEFTALSSLLVLFLLLAVSA) is a signal peptide. The Chitin-binding type-1 domain occupies 24–65 (EQCGKQAGGARCPSGMCCSNFGWCGNTQDYCGPGKCQSQCPS). Cystine bridges form between cysteine 26–cysteine 41, cysteine 35–cysteine 47, cysteine 40–cysteine 54, and cysteine 59–cysteine 63. A disordered region spans residues 64-84 (PSGPGPTPRPPTPTPGPSTGD). The span at 66 to 79 (GPGPTPRPPTPTPG) shows a compositional bias: pro residues. A 4-hydroxyproline mark is found at proline 73, proline 74, and proline 76. Disulfide bonds link cysteine 106-cysteine 168, cysteine 180-cysteine 188, and cysteine 287-cysteine 319. Glutamate 150 functions as the Proton donor in the catalytic mechanism. Positions 328 to 334 (GLLLETM) are cleaved as a propeptide — removed in mature form.

The protein belongs to the glycosyl hydrolase 19 family. Chitinase class I subfamily. The 4-hydroxyproline residues are not glycosylated in this plant vacuolar protein.

It localises to the vacuole. The enzyme catalyses Random endo-hydrolysis of N-acetyl-beta-D-glucosaminide (1-&gt;4)-beta-linkages in chitin and chitodextrins.. Defense against chitin-containing fungal pathogens. This is Endochitinase 3 (CHN14) from Nicotiana tabacum (Common tobacco).